The chain runs to 336 residues: Dihydroorotate dehydrogenase (quinone) (336 aa).

FMN contacts are provided by residues 62–66 (AGLDK) and Thr86. Residue Lys66 coordinates substrate. 111 to 115 (NRMGF) lines the substrate pocket. Residues Asn139 and Asn172 each coordinate FMN. Substrate is bound at residue Asn172. The active-site Nucleophile is the Ser175. Asn177 serves as a coordination point for substrate. FMN contacts are provided by Lys217 and Thr245. Substrate is bound at residue 246–247 (NT). FMN is bound by residues Gly268, Gly297, and 318-319 (YS).

It belongs to the dihydroorotate dehydrogenase family. Type 2 subfamily. In terms of assembly, monomer. The cofactor is FMN.

The protein localises to the cell membrane. The catalysed reaction is (S)-dihydroorotate + a quinone = orotate + a quinol. The protein operates within pyrimidine metabolism; UMP biosynthesis via de novo pathway; orotate from (S)-dihydroorotate (quinone route): step 1/1. Functionally, catalyzes the conversion of dihydroorotate to orotate with quinone as electron acceptor. The polypeptide is Dihydroorotate dehydrogenase (quinone) (Klebsiella pneumoniae subsp. pneumoniae (strain ATCC 700721 / MGH 78578)).